The chain runs to 264 residues: Glutamate racemase (264 aa).

Residues 10 to 11 (DS) and 42 to 43 (YG) contribute to the substrate site. The Proton donor/acceptor role is filled by cysteine 73. 74-75 (NT) serves as a coordination point for substrate. The active-site Proton donor/acceptor is the cysteine 183. 184–185 (TH) lines the substrate pocket.

The protein belongs to the aspartate/glutamate racemases family.

It carries out the reaction L-glutamate = D-glutamate. Its pathway is cell wall biogenesis; peptidoglycan biosynthesis. Provides the (R)-glutamate required for cell wall biosynthesis. The polypeptide is Glutamate racemase (Streptococcus pyogenes serotype M3 (strain ATCC BAA-595 / MGAS315)).